Reading from the N-terminus, the 154-residue chain is MRKVKPARKLGRTTAHRKATLSNLSTQLLIHKRIETTEAKAKETRKVVEKIITKARKGTHHAQREIFSALRNKEAVQELFEEIVGRIGSRNGGYTRIIKLAPRFGDAAKMAVIELVDFAEAPAAASTAAKQDRAKRVKGSKKAETEKEGGESAE.

A disordered region spans residues 127–154; sequence TAAKQDRAKRVKGSKKAETEKEGGESAE. Over residues 141-154 the composition is skewed to basic and acidic residues; that stretch reads KKAETEKEGGESAE.

Belongs to the bacterial ribosomal protein bL17 family. Part of the 50S ribosomal subunit. Contacts protein L32.

This Chlorobaculum parvum (strain DSM 263 / NCIMB 8327) (Chlorobium vibrioforme subsp. thiosulfatophilum) protein is Large ribosomal subunit protein bL17.